The primary structure comprises 242 residues: C-reactive protein 1.4 (242 aa).

Residues 1 to 24 form the signal peptide; sequence MKTFHGPTFGTAVFLYLLLFLTSA. The 212-residue stretch at 30 to 241 folds into the Pentraxin (PTX) domain; the sequence is ITSKVKFPPS…GVVLSPNEIC (212 aa). Positions 60 and 63 each coordinate phosphocholine. 2 disulfide bridges follow: cysteine 62–cysteine 125 and cysteine 112–cysteine 144. Residues aspartate 85 and asparagine 86 each contribute to the Ca(2+) site. Asparagine 147 carries N-linked (GlcNAc...) asparagine glycosylation. Residues glutamate 168, glutamine 169, aspartate 170, and glutamine 180 each coordinate Ca(2+). A disulfide bond links cysteine 207 and cysteine 241.

This sequence belongs to the pentraxin family. Homopentamer. Pentraxin (or pentaxin) have a discoid arrangement of 5 non-covalently bound subunits. It depends on Ca(2+) as a cofactor.

It localises to the secreted. Might serve the role of immunoglobulins. In Limulus polyphemus (Atlantic horseshoe crab), this protein is C-reactive protein 1.4.